We begin with the raw amino-acid sequence, 336 residues long: Glyceraldehyde-3-phosphate dehydrogenase (336 aa).

NAD(+) contacts are provided by residues 12–13 (RI), aspartate 34, arginine 78, and threonine 121. D-glyceraldehyde 3-phosphate contacts are provided by residues 151–153 (SCT), threonine 182, arginine 199, 212–213 (TG), and arginine 235. Cysteine 152 acts as the Nucleophile in catalysis. Position 316 (asparagine 316) interacts with NAD(+).

Belongs to the glyceraldehyde-3-phosphate dehydrogenase family. Homotetramer.

Its subcellular location is the cytoplasm. The enzyme catalyses D-glyceraldehyde 3-phosphate + phosphate + NAD(+) = (2R)-3-phospho-glyceroyl phosphate + NADH + H(+). The protein operates within carbohydrate degradation; glycolysis; pyruvate from D-glyceraldehyde 3-phosphate: step 1/5. Catalyzes the oxidative phosphorylation of glyceraldehyde 3-phosphate (G3P) to 1,3-bisphosphoglycerate (BPG) using the cofactor NAD. The first reaction step involves the formation of a hemiacetal intermediate between G3P and a cysteine residue, and this hemiacetal intermediate is then oxidized to a thioester, with concomitant reduction of NAD to NADH. The reduced NADH is then exchanged with the second NAD, and the thioester is attacked by a nucleophilic inorganic phosphate to produce BPG. This Streptococcus pyogenes serotype M1 protein is Glyceraldehyde-3-phosphate dehydrogenase (gap).